A 308-amino-acid chain; its full sequence is Tryptophan 2,3-dioxygenase (308 aa).

The segment at 1–35 is disordered; it reads MQPPGDNAPAGCPFSGAHAAQPAHEAPHVPGDAAG. Positions 17-30 are enriched in low complexity; sequence AHAAQPAHEAPHVP. Substrate contacts are provided by residues 77–81, Y139, and R143; that span reads FIIQH. H266 is a binding site for heme. T280 contacts substrate.

Belongs to the tryptophan 2,3-dioxygenase family. Homotetramer. It depends on heme as a cofactor.

It carries out the reaction L-tryptophan + O2 = N-formyl-L-kynurenine. It functions in the pathway amino-acid degradation; L-tryptophan degradation via kynurenine pathway; L-kynurenine from L-tryptophan: step 1/2. Functionally, heme-dependent dioxygenase that catalyzes the oxidative cleavage of the L-tryptophan (L-Trp) pyrrole ring and converts L-tryptophan to N-formyl-L-kynurenine. Catalyzes the oxidative cleavage of the indole moiety. The polypeptide is Tryptophan 2,3-dioxygenase (Burkholderia ambifaria (strain ATCC BAA-244 / DSM 16087 / CCUG 44356 / LMG 19182 / AMMD) (Burkholderia cepacia (strain AMMD))).